Reading from the N-terminus, the 266-residue chain is Apolipoprotein A-I (266 aa).

A signal peptide spans methionine 1–alanine 18. 2 repeat units span residues leucine 67–glycine 88 and proline 89–asparagine 110. Positions leucine 67–glutamine 266 are 10 X approximate tandem repeats. Methionine 109 carries the post-translational modification Methionine sulfoxide. One copy of the 3; half-length repeat lies at lysine 111 to glutamine 121. 5 tandem repeats follow at residues proline 122–alanine 143, proline 144–serine 165, proline 166–alanine 187, proline 188–glycine 209, and alanine 210–lysine 231. Residues proline 232–leucine 242 form a 9; half-length repeat. Copy 10 of the repeat occupies proline 243 to glutamine 266.

It belongs to the apolipoprotein A1/A4/E family. In terms of assembly, homodimer. Interacts with APOA1BP and CLU. Component of a sperm activating protein complex (SPAP), consisting of APOA1, an immunoglobulin heavy chain, an immunoglobulin light chain and albumin. Interacts with NDRG1. Interacts with SCGB3A2. Interacts with NAXE and YJEFN3. Post-translationally, glycosylated. In terms of processing, palmitoylated. Phosphorylation sites are present in the extracellular medium.

It localises to the secreted. Participates in the reverse transport of cholesterol from tissues to the liver for excretion by promoting cholesterol efflux from tissues and by acting as a cofactor for the lecithin cholesterol acyltransferase (LCAT). As part of the SPAP complex, activates spermatozoa motility. This is Apolipoprotein A-I (APOA1) from Neomonachus schauinslandi (Hawaiian monk seal).